Here is a 247-residue protein sequence, read N- to C-terminus: Cell division protein ZapD (247 aa).

The protein belongs to the ZapD family. As to quaternary structure, interacts with FtsZ.

Its subcellular location is the cytoplasm. Functionally, cell division factor that enhances FtsZ-ring assembly. Directly interacts with FtsZ and promotes bundling of FtsZ protofilaments, with a reduction in FtsZ GTPase activity. In Shigella dysenteriae serotype 1 (strain Sd197), this protein is Cell division protein ZapD.